Consider the following 330-residue polypeptide: Transcription factor TGA2 (330 aa).

The interval 1 to 48 (MADTSPRTDVSTDDDTDHPDLGSEGALVNTAASDSSDRSKGKMDQKTL) is disordered. The span at 35-47 (SSDRSKGKMDQKT) shows a compositional bias: basic and acidic residues. Residues 44 to 107 (DQKTLRRLAQ…GTGDQAHSTG (64 aa)) enclose the bZIP domain. 2 coiled-coil regions span residues 45 to 142 (QKTL…HAGD) and 217 to 244 (INNLQQTSQQAEDALSQGMESLQQSLAD). Positions 46–66 (KTLRRLAQNREAARKSRLRKK) are basic motif. Residues 72 to 86 (LENSRLKLTQLEQEL) form a leucine-zipper region. In terms of domain architecture, DOG1 spans 111-327 (ALAFDAEHSR…RALSSLWLAR (217 aa)).

The protein belongs to the bZIP family. As to quaternary structure, binds DNA as a dimer. Interacts with NPR1, NPR3 and NPR4. Interacts with GRXC7/ROXY1 and GRXC9/GRX480. In terms of tissue distribution, expressed in the whole plant.

Its subcellular location is the nucleus. Its function is as follows. Transcriptional activator that binds specifically to the DNA sequence 5'-TGACG-3'. Recognizes ocs elements like the as-1 motif of the cauliflower mosaic virus 35S promoter. Binding to the as-1-like cis elements mediate auxin- and salicylic acid-inducible transcription. Required to induce the systemic acquired resistance (SAR) via the regulation of pathogenesis-related genes expression. Binding to the as-1 element of PR-1 promoter is salicylic acid-inducible and mediated by NPR1. Could also bind to the C-boxes (5'-ATGACGTCAT-3') with high affinity. The protein is Transcription factor TGA2 (TGA2) of Arabidopsis thaliana (Mouse-ear cress).